The primary structure comprises 805 residues: Phenylalanine--tRNA ligase beta subunit (805 aa).

In terms of domain architecture, tRNA-binding spans 39 to 148 (APPFTGVVVA…AALRPGTDIR (110 aa)). One can recognise a B5 domain in the interval 399–474 (PVREPVRMRL…RVYGFERIPD (76 aa)). 4 residues coordinate Mg(2+): D452, D458, E461, and E462. In terms of domain architecture, FDX-ACB spans 703-804 (SRQPAVVRDL…LVAAHNARQR (102 aa)).

Belongs to the phenylalanyl-tRNA synthetase beta subunit family. Type 1 subfamily. Tetramer of two alpha and two beta subunits. The cofactor is Mg(2+).

Its subcellular location is the cytoplasm. It catalyses the reaction tRNA(Phe) + L-phenylalanine + ATP = L-phenylalanyl-tRNA(Phe) + AMP + diphosphate + H(+). The sequence is that of Phenylalanine--tRNA ligase beta subunit from Bordetella bronchiseptica (strain ATCC BAA-588 / NCTC 13252 / RB50) (Alcaligenes bronchisepticus).